A 757-amino-acid chain; its full sequence is Cartilage oligomeric matrix protein (757 aa).

A signal peptide spans 1–20 (MVPDTACVLLLTLAALGASG). The interval 22–86 (GQSPLGSDLG…SVRTGLPSVR (65 aa)) is COMP N-terminal. Residues 87–126 (PLLHCAPGFCFPGVACIQTESGARCGPCPAGFTGNGSHCT) enclose the EGF-like 1 domain. Intrachain disulfides connect Cys-91–Cys-102, Cys-96–Cys-111, Cys-114–Cys-125, Cys-131–Cys-142, Cys-136–Cys-151, Cys-154–Cys-178, Cys-184–Cys-197, Cys-191–Cys-206, Cys-209–Cys-221, Cys-229–Cys-243, Cys-237–Cys-253, Cys-255–Cys-266, Cys-282–Cys-287, Cys-292–Cys-312, Cys-328–Cys-348, Cys-351–Cys-371, Cys-387–Cys-407, Cys-410–Cys-430, Cys-448–Cys-468, Cys-484–Cys-504, and Cys-520–Cys-741. The N-linked (GlcNAc...) asparagine glycan is linked to Asn-121. Residues 127 to 179 (DVNECNAHPCFPRVRCINTSPGFRCEACPPGYSGPTHQGVGLAFAKANKQVCT) form the EGF-like 2; calcium-binding domain. One can recognise an EGF-like 3; calcium-binding domain in the interval 180-222 (DINECETGQHNCVPNSVCINTRGSFQCGPCQPGFVGDQASGCQ). The region spanning 225–267 (AQRFCPDGSPSECHEHADCVLERDGSRSCVCAVGWAGNGILCG) is the EGF-like 4 domain. TSP type-3 repeat units lie at residues 268 to 300 (RDTD…NSGQ), 301 to 336 (EDVD…NPDQ), 337 to 359 (RNTD…NDDQ), 360 to 395 (KDTD…NSDQ), 396 to 418 (KDSD…NPDQ), 419 to 456 (ADVD…NSAQ), 457 to 492 (EDSD…NPGQ), and 493 to 528 (EDAD…EVTL). A disordered region spans residues 298 to 503 (SGQEDVDRDG…DADRDGVGDV (206 aa)). Composition is skewed to basic and acidic residues over residues 334-346 (PDQR…KWGD) and 352-370 (RSQK…RGDA). Residues 367-369 (RGD) carry the Cell attachment site motif. A compositionally biased stretch (acidic residues) spans 467–476 (ACDDDDDNDG). The interval 527–757 (TLTDFRAFQT…DYETHQLRQA (231 aa)) is mediates cell survival and induction of the IAP family of survival proteins. The TSP C-terminal domain maps to 532–746 (RAFQTVVLDP…LRYRCNDTIP (215 aa)). An N-linked (GlcNAc...) asparagine glycan is attached at Asn-742.

Belongs to the thrombospondin family. In terms of assembly, pentamer; disulfide-linked. Exists in a more compact conformation in the presence of calcium and shows a more extended conformation in the absence of calcium. Interacts with ITGB3, ITGA5 and FN1. Binding to FN1 requires the presence of divalent cations (Ca(2+), Mg(2+) or Mn(2+)). The greatest amount of binding is seen in the presence of Mn(2+). Interacts with MATN1, MATN3, MATN4 and ACAN. Binds heparin, heparan sulfate and chondroitin sulfate. EDTA dimishes significantly its binding to ACAN and abolishes its binding to MATN3, MATN4 and chondroitin sulfate. Interacts with collagen I, II and IX, and interaction with these collagens is dependent on the presence of zinc ions. Interacts with ADAMTS12. Interacts with ITGA7. The cofactor is Ca(2+). Proteolytically cleaved by metalloproteases ADAMTS4 and ADAMTS1 with ADAMTS4 showing more potent activity. In terms of tissue distribution, abundantly expressed in the chondrocyte extracellular matrix, and is also found in bone, tendon, ligament and synovium and blood vessels. Increased amounts are produced during late stages of osteoarthritis in the area adjacent to the main defect.

It localises to the secreted. The protein localises to the extracellular space. The protein resides in the extracellular matrix. Plays a role in the structural integrity of cartilage via its interaction with other extracellular matrix proteins such as the collagens and fibronectin. Can mediate the interaction of chondrocytes with the cartilage extracellular matrix through interaction with cell surface integrin receptors. Could play a role in the pathogenesis of osteoarthritis. Potent suppressor of apoptosis in both primary chondrocytes and transformed cells. Suppresses apoptosis by blocking the activation of caspase-3 and by inducing the IAP family of survival proteins (BIRC3, BIRC2, BIRC5 and XIAP). Essential for maintaining a vascular smooth muscle cells (VSMCs) contractile/differentiated phenotype under physiological and pathological stimuli. Maintains this phenotype of VSMCs by interacting with ITGA7. The polypeptide is Cartilage oligomeric matrix protein (Homo sapiens (Human)).